We begin with the raw amino-acid sequence, 178 residues long: MTKKEQALIEQYAKSLVEVASEHHSLDTLQADVLAILETFETTNLDQSLSSLAVPHAEKIKLLTLLERNNSVYMNNFLNLILQNEREAYLYQMLQAVLNEIAIVSNQYNVTVTSSLPLTEEQKSRVRAVVAKKFAVTAGRLIEKVDPSLIGGFIISVNNKVIDTSIRRQLQAFKMNLK.

This sequence belongs to the ATPase delta chain family. In terms of assembly, F-type ATPases have 2 components, F(1) - the catalytic core - and F(0) - the membrane proton channel. F(1) has five subunits: alpha(3), beta(3), gamma(1), delta(1), epsilon(1). F(0) has three main subunits: a(1), b(2) and c(10-14). The alpha and beta chains form an alternating ring which encloses part of the gamma chain. F(1) is attached to F(0) by a central stalk formed by the gamma and epsilon chains, while a peripheral stalk is formed by the delta and b chains.

The protein resides in the cell membrane. Functionally, f(1)F(0) ATP synthase produces ATP from ADP in the presence of a proton or sodium gradient. F-type ATPases consist of two structural domains, F(1) containing the extramembraneous catalytic core and F(0) containing the membrane proton channel, linked together by a central stalk and a peripheral stalk. During catalysis, ATP synthesis in the catalytic domain of F(1) is coupled via a rotary mechanism of the central stalk subunits to proton translocation. In terms of biological role, this protein is part of the stalk that links CF(0) to CF(1). It either transmits conformational changes from CF(0) to CF(1) or is implicated in proton conduction. The chain is ATP synthase subunit delta from Streptococcus pyogenes serotype M4 (strain MGAS10750).